The sequence spans 273 residues: Large ribosomal subunit protein uL2 (273 aa).

2 disordered regions span residues 28-53 (KPFA…TTRH) and 221-273 (RGTA…RRSK). Positions 39–48 (KSGGRNNNGR) are enriched in low complexity. Residue K242 is modified to N6-acetyllysine.

It belongs to the universal ribosomal protein uL2 family. Part of the 50S ribosomal subunit. Forms a bridge to the 30S subunit in the 70S ribosome.

Functionally, one of the primary rRNA binding proteins. Required for association of the 30S and 50S subunits to form the 70S ribosome, for tRNA binding and peptide bond formation. It has been suggested to have peptidyltransferase activity; this is somewhat controversial. Makes several contacts with the 16S rRNA in the 70S ribosome. This is Large ribosomal subunit protein uL2 from Shigella dysenteriae serotype 1 (strain Sd197).